Reading from the N-terminus, the 544-residue chain is Putative glycerol-3-phosphate transporter 4 (544 aa).

6 helical membrane-spanning segments follow: residues 28 to 47 (TFRY…YHAS), 121 to 141 (VAFL…GDSL), 156 to 176 (FFVG…WFFL), 181 to 201 (AAGL…GNWF), 218 to 238 (SVGN…GWGW), and 240 to 260 (FIAP…FLAA). A disordered region spans residues 281–313 (KRDVEEEEEEVEEDLGTDVEGDGEGSSGSGSGY). Residues 285–303 (EEEEEEVEEDLGTDVEGDG) show a composition bias toward acidic residues. Helical transmembrane passes span 319–339 (VGLL…CLFF), 342–362 (LVAY…TIGG), 371–391 (GNLS…CGYI), 402–422 (AAAF…YGGV), 428–448 (ILLM…ITTA), 471–491 (AIID…TGFL), and 494–514 (LGWQ…GLLL).

It belongs to the major facilitator superfamily. Organophosphate:Pi antiporter (OPA) (TC 2.A.1.4) family.

The protein localises to the membrane. The polypeptide is Putative glycerol-3-phosphate transporter 4 (Arabidopsis thaliana (Mouse-ear cress)).